Consider the following 190-residue polypeptide: Bifunctional protein PyrR (190 aa).

The PRPP-binding motif lies at 107-119 (IILVDDVLYSGRT).

Belongs to the purine/pyrimidine phosphoribosyltransferase family. PyrR subfamily.

The enzyme catalyses UMP + diphosphate = 5-phospho-alpha-D-ribose 1-diphosphate + uracil. Regulates the transcription of the pyrimidine nucleotide (pyr) operon in response to exogenous pyrimidines. In terms of biological role, also displays a weak uracil phosphoribosyltransferase activity which is not physiologically significant. This is Bifunctional protein PyrR from Corynebacterium diphtheriae (strain ATCC 700971 / NCTC 13129 / Biotype gravis).